The chain runs to 325 residues: uncharacterized protein (325 aa).

2 stretches are compositionally biased toward polar residues: residues 1 to 21 (MSYQQRANDSMNSAKQYSSSA) and 29 to 57 (EPFSSSGAPQNRNFDTSYTSEIPSNSSRA). Residues 1–325 (MSYQQRANDS…LKTGHHSERY (325 aa)) form a disordered region. The span at 86–109 (ESRKKEQSDVRGGDTSYSRRHDDS) shows a compositional bias: basic and acidic residues. 2 stretches are compositionally biased toward polar residues: residues 114-167 (NKYS…TTQG) and 174-193 (YSQSYPTDTYGSRQKATPSD). 2 stretches are compositionally biased toward low complexity: residues 200 to 210 (YDYSSSGSHTH) and 252 to 278 (ATDTTAEANRRAATGTRNARTTAQRNA). Residues 282–325 (EDEHVSMGDKMKGNMEKMAGKLTRDPELVQKGEDLKTGHHSERY) are compositionally biased toward basic and acidic residues.

This is an uncharacterized protein from Schizosaccharomyces pombe (strain 972 / ATCC 24843) (Fission yeast).